Reading from the N-terminus, the 304-residue chain is Transcription factor BEE 2 (304 aa).

The interval 74 to 132 is disordered; the sequence is FHMEPVKNNGHSRAITLQNKRKPEGKTEKREKKKIKAEDETEPSMKGKSNMSNTETSSE. Over residues 82–91 the composition is skewed to polar residues; it reads NGHSRAITLQ. The segment covering 94-103 has biased composition (basic and acidic residues); that stretch reads RKPEGKTEKR. Polar residues predominate over residues 120 to 132; the sequence is GKSNMSNTETSSE. The bHLH domain maps to 147 to 197; it reads EATDRHSLAERARREKISKKMKCLQDIVPGCNKVTGKAGMLDEIINYVQSL.

In terms of assembly, homodimer. Expressed in stems and flowers.

It is found in the nucleus. Positive regulator of brassinosteroid signaling. This chain is Transcription factor BEE 2 (BEE2), found in Arabidopsis thaliana (Mouse-ear cress).